The chain runs to 379 residues: Mannitol-1-phosphate 5-dehydrogenase (379 aa).

NAD(+) is bound at residue Ala-3–Gly-14.

Belongs to the mannitol dehydrogenase family.

The enzyme catalyses D-mannitol 1-phosphate + NAD(+) = beta-D-fructose 6-phosphate + NADH + H(+). The sequence is that of Mannitol-1-phosphate 5-dehydrogenase from Bacillus licheniformis (strain ATCC 14580 / DSM 13 / JCM 2505 / CCUG 7422 / NBRC 12200 / NCIMB 9375 / NCTC 10341 / NRRL NRS-1264 / Gibson 46).